We begin with the raw amino-acid sequence, 172 residues long: UBA-like domain-containing protein 2 (172 aa).

Pro residues predominate over residues 118-130 (PPNQQPVWLPPSS). Residues 118-172 (PPNQQPVWLPPSSPTGHHTLHHHHHHMHPPPSWPPVSQPANGPQTPVISALHGQR) are disordered. Over residues 135 to 145 (HTLHHHHHHMH) the composition is skewed to basic residues.

This sequence belongs to the UBALD family.

This Danio rerio (Zebrafish) protein is UBA-like domain-containing protein 2 (ubald2).